Consider the following 336-residue polypeptide: Transmembrane protein 19 (336 aa).

Helical transmembrane passes span 15 to 35, 49 to 69, 84 to 104, 218 to 238, 257 to 277, and 313 to 333; these read MITN…FWII, ISPW…SNGL, VVGF…LMFF, VTVV…IAYF, IIAF…YLGA, and VNLF…WGFW.

This sequence belongs to the TMEM19 family.

The protein localises to the membrane. This chain is Transmembrane protein 19 (TMEM19), found in Homo sapiens (Human).